An 83-amino-acid chain; its full sequence is Small ribosomal subunit protein bS20 (83 aa).

The protein belongs to the bacterial ribosomal protein bS20 family.

Functionally, binds directly to 16S ribosomal RNA. The chain is Small ribosomal subunit protein bS20 from Leuconostoc mesenteroides subsp. mesenteroides (strain ATCC 8293 / DSM 20343 / BCRC 11652 / CCM 1803 / JCM 6124 / NCDO 523 / NBRC 100496 / NCIMB 8023 / NCTC 12954 / NRRL B-1118 / 37Y).